A 470-amino-acid chain; its full sequence is Glutamate--tRNA ligase (470 aa).

The 'HIGH' region motif lies at 15–25 (PSPTGFLHIGG). Positions 240–244 (KLSKR) match the 'KMSKS' region motif. Residue Lys243 participates in ATP binding.

Belongs to the class-I aminoacyl-tRNA synthetase family. Glutamate--tRNA ligase type 1 subfamily. Monomer.

The protein localises to the cytoplasm. It carries out the reaction tRNA(Glu) + L-glutamate + ATP = L-glutamyl-tRNA(Glu) + AMP + diphosphate. Catalyzes the attachment of glutamate to tRNA(Glu) in a two-step reaction: glutamate is first activated by ATP to form Glu-AMP and then transferred to the acceptor end of tRNA(Glu). This chain is Glutamate--tRNA ligase, found in Caulobacter vibrioides (strain ATCC 19089 / CIP 103742 / CB 15) (Caulobacter crescentus).